We begin with the raw amino-acid sequence, 245 residues long: Tetraspanin-16 (245 aa).

Topologically, residues 1–13 (MAEIHTPYSSLKK) are cytoplasmic. A helical membrane pass occupies residues 14-34 (LLSLLNGFVAVSGIILVGLGI). At 35 to 37 (GGK) the chain is on the extracellular side. The helical transmembrane segment at 38 to 58 (CGGASLTNVLGLSSAYLLHVG) threads the bilayer. A topological domain (cytoplasmic) is located at residue N59. A helical membrane pass occupies residues 60 to 80 (LCLVMGCITVLLGCAGWYGAT). At 81–94 (KESRGTLLFCILSM) the chain is on the extracellular side. Residues 95–115 (VIVLIMEVTAATVVLLFFPIV) form a helical membrane-spanning segment. Residues 116-245 (GDVALEHTFV…VAQAGLELLA (130 aa)) lie on the Cytoplasmic side of the membrane.

Belongs to the tetraspanin (TM4SF) family. In terms of tissue distribution, broadly expressed in most human tissues and cell lines including neural and bone marrow derived tissues.

The protein localises to the membrane. This Homo sapiens (Human) protein is Tetraspanin-16 (TSPAN16).